Here is a 698-residue protein sequence, read N- to C-terminus: Probable threonine--tRNA ligase 2, cytoplasmic (698 aa).

One can recognise a TGS domain in the interval 38–100; the sequence is GGGNIKLNDG…EMSGKDYNIE (63 aa). Residues 541-560 form a disordered region; it reads NNNNNNNNNNEEINDNNNNN.

It belongs to the class-II aminoacyl-tRNA synthetase family.

Its subcellular location is the cytoplasm. It carries out the reaction tRNA(Thr) + L-threonine + ATP = L-threonyl-tRNA(Thr) + AMP + diphosphate + H(+). The chain is Probable threonine--tRNA ligase 2, cytoplasmic (thrS2) from Dictyostelium discoideum (Social amoeba).